We begin with the raw amino-acid sequence, 909 residues long: Protein translocase subunit SecA (909 aa).

ATP-binding positions include Gln-87, 105–109, and Asp-513; that span reads GEGKT. Positions 834-909 are disordered; it reads QEEVERMEEQ…KYKQCHGKID (76 aa). Positions 836–853 are enriched in basic and acidic residues; that stretch reads EVERMEEQRRAQAEEAAR. The span at 854 to 863 shows a compositional bias: low complexity; sequence RAQAQHAAAQ. The span at 874 to 889 shows a compositional bias: basic and acidic residues; the sequence is EGAHQPMVREERKVGR. Positions 893, 895, 904, and 905 each coordinate Zn(2+). The span at 899–909 shows a compositional bias: basic residues; sequence KKYKQCHGKID.

This sequence belongs to the SecA family. In terms of assembly, monomer and homodimer. Part of the essential Sec protein translocation apparatus which comprises SecA, SecYEG and auxiliary proteins SecDF-YajC and YidC. Requires Zn(2+) as cofactor.

It localises to the cell inner membrane. It is found in the cytoplasm. It catalyses the reaction ATP + H2O + cellular proteinSide 1 = ADP + phosphate + cellular proteinSide 2.. Its function is as follows. Part of the Sec protein translocase complex. Interacts with the SecYEG preprotein conducting channel. Has a central role in coupling the hydrolysis of ATP to the transfer of proteins into and across the cell membrane, serving both as a receptor for the preprotein-SecB complex and as an ATP-driven molecular motor driving the stepwise translocation of polypeptide chains across the membrane. The polypeptide is Protein translocase subunit SecA (Vibrio campbellii (strain ATCC BAA-1116)).